A 119-amino-acid polypeptide reads, in one-letter code: Ribonuclease P protein component (119 aa).

This sequence belongs to the RnpA family. Consists of a catalytic RNA component (M1 or rnpB) and a protein subunit.

The catalysed reaction is Endonucleolytic cleavage of RNA, removing 5'-extranucleotides from tRNA precursor.. RNaseP catalyzes the removal of the 5'-leader sequence from pre-tRNA to produce the mature 5'-terminus. It can also cleave other RNA substrates such as 4.5S RNA. The protein component plays an auxiliary but essential role in vivo by binding to the 5'-leader sequence and broadening the substrate specificity of the ribozyme. The sequence is that of Ribonuclease P protein component from Yersinia enterocolitica serotype O:8 / biotype 1B (strain NCTC 13174 / 8081).